Here is a 376-residue protein sequence, read N- to C-terminus: Histidinol-phosphate aminotransferase (376 aa).

A disordered region spans residues 1-21 (MQPRDLSAHEPYVPGRGTKEV). Lysine 222 is modified (N6-(pyridoxal phosphate)lysine).

It belongs to the class-II pyridoxal-phosphate-dependent aminotransferase family. Histidinol-phosphate aminotransferase subfamily. Requires pyridoxal 5'-phosphate as cofactor.

It carries out the reaction L-histidinol phosphate + 2-oxoglutarate = 3-(imidazol-4-yl)-2-oxopropyl phosphate + L-glutamate. It participates in amino-acid biosynthesis; L-histidine biosynthesis; L-histidine from 5-phospho-alpha-D-ribose 1-diphosphate: step 7/9. In Haloquadratum walsbyi (strain DSM 16790 / HBSQ001), this protein is Histidinol-phosphate aminotransferase.